The chain runs to 70 residues: ATP synthase subunit c (70 aa).

2 helical membrane-spanning segments follow: residues 4–24 (IAAA…NGLI) and 45–65 (IMFI…VIAF).

Belongs to the ATPase C chain family. F-type ATPases have 2 components, F(1) - the catalytic core - and F(0) - the membrane proton channel. F(1) has five subunits: alpha(3), beta(3), gamma(1), delta(1), epsilon(1). F(0) has three main subunits: a(1), b(2) and c(10-14). The alpha and beta chains form an alternating ring which encloses part of the gamma chain. F(1) is attached to F(0) by a central stalk formed by the gamma and epsilon chains, while a peripheral stalk is formed by the delta and b chains.

The protein resides in the cell membrane. In terms of biological role, f(1)F(0) ATP synthase produces ATP from ADP in the presence of a proton or sodium gradient. F-type ATPases consist of two structural domains, F(1) containing the extramembraneous catalytic core and F(0) containing the membrane proton channel, linked together by a central stalk and a peripheral stalk. During catalysis, ATP synthesis in the catalytic domain of F(1) is coupled via a rotary mechanism of the central stalk subunits to proton translocation. Functionally, key component of the F(0) channel; it plays a direct role in translocation across the membrane. A homomeric c-ring of between 10-14 subunits forms the central stalk rotor element with the F(1) delta and epsilon subunits. The chain is ATP synthase subunit c from Staphylococcus haemolyticus (strain JCSC1435).